A 70-amino-acid polypeptide reads, in one-letter code: Large ribosomal subunit protein bL31c (70 aa).

The protein belongs to the bacterial ribosomal protein bL31 family. Type A subfamily. Part of the 50S ribosomal subunit.

The protein resides in the plastid. Its subcellular location is the chloroplast. In terms of biological role, binds the 23S rRNA. This chain is Large ribosomal subunit protein bL31c, found in Pyropia yezoensis (Susabi-nori).